The chain runs to 417 residues: Serine hydroxymethyltransferase (417 aa).

(6S)-5,6,7,8-tetrahydrofolate is bound by residues Leu-121 and 125 to 127 (GHL). Residue Lys-229 is modified to N6-(pyridoxal phosphate)lysine. 355–357 (SPF) contacts (6S)-5,6,7,8-tetrahydrofolate.

The protein belongs to the SHMT family. Homodimer. Requires pyridoxal 5'-phosphate as cofactor.

It localises to the cytoplasm. It catalyses the reaction (6R)-5,10-methylene-5,6,7,8-tetrahydrofolate + glycine + H2O = (6S)-5,6,7,8-tetrahydrofolate + L-serine. The protein operates within one-carbon metabolism; tetrahydrofolate interconversion. Its pathway is amino-acid biosynthesis; glycine biosynthesis; glycine from L-serine: step 1/1. Its function is as follows. Catalyzes the reversible interconversion of serine and glycine with tetrahydrofolate (THF) serving as the one-carbon carrier. This reaction serves as the major source of one-carbon groups required for the biosynthesis of purines, thymidylate, methionine, and other important biomolecules. Also exhibits THF-independent aldolase activity toward beta-hydroxyamino acids, producing glycine and aldehydes, via a retro-aldol mechanism. The protein is Serine hydroxymethyltransferase of Shewanella baltica (strain OS155 / ATCC BAA-1091).